A 422-amino-acid polypeptide reads, in one-letter code: MNSLNKKSIKDLDVNGKTIVLHLDLNVVVDYENKRILNDRKLRASLPTINYLINHNAKIVILSHLGRIKTLADKQSGKYSLEIIVDELRNRVSKNVNRVVFSPLNYGETVVQMVNDLEERDILILENTRYCDISDEGEYVGLEWDGSEILGQFWGMLGDIFIDDAYGVAHRQLSSNYQTAKFAKKSALGFLIVNEINHLDIALEVPKSPYLALIGGNRVADKIAAIEVLCERADQVIIGGGLVYTFLYAQGYNVGLNLVERNMIDDCNNILEKYGKKILICFDFLCNNDFSDTRPIYRKIDEGLEGLYGLDIGKRSLKFIKHEIYRSKTILLNGPFGVIENIKNYAQGTTEICKSMAKQTTRGAYTIICDIDTSSHAEYLGLDKYINFISTGGGASLSYIEEGVLDGLETIDNVPLNVLKKE.

Substrate contacts are provided by residues 24–26, 64–67, arginine 129, and arginine 171; these read DLN and HLGR. Residues lysine 222, glycine 309, glutamate 340, and 370 to 373 each bind ATP; that span reads DIDT.

It belongs to the phosphoglycerate kinase family. Monomer.

Its subcellular location is the cytoplasm. The enzyme catalyses (2R)-3-phosphoglycerate + ATP = (2R)-3-phospho-glyceroyl phosphate + ADP. It functions in the pathway carbohydrate degradation; glycolysis; pyruvate from D-glyceraldehyde 3-phosphate: step 2/5. This chain is Phosphoglycerate kinase (pgk), found in Ureaplasma parvum serovar 3 (strain ATCC 700970).